The sequence spans 310 residues: tRNA-cytidine(32) 2-sulfurtransferase (310 aa).

The PP-loop motif signature appears at 47 to 52 (SGGKDS). 3 residues coordinate [4Fe-4S] cluster: Cys122, Cys125, and Cys213.

Belongs to the TtcA family. Homodimer. Mg(2+) is required as a cofactor. [4Fe-4S] cluster serves as cofactor.

It is found in the cytoplasm. The catalysed reaction is cytidine(32) in tRNA + S-sulfanyl-L-cysteinyl-[cysteine desulfurase] + AH2 + ATP = 2-thiocytidine(32) in tRNA + L-cysteinyl-[cysteine desulfurase] + A + AMP + diphosphate + H(+). Its pathway is tRNA modification. Functionally, catalyzes the ATP-dependent 2-thiolation of cytidine in position 32 of tRNA, to form 2-thiocytidine (s(2)C32). The sulfur atoms are provided by the cysteine/cysteine desulfurase (IscS) system. The chain is tRNA-cytidine(32) 2-sulfurtransferase from Cronobacter sakazakii (strain ATCC BAA-894) (Enterobacter sakazakii).